Consider the following 518-residue polypeptide: Arginyl-tRNA--protein transferase 1 (518 aa).

A compositionally biased stretch (basic and acidic residues) spans 149–165; the sequence is ESLQSEGKNSKKEEPHE. Residues 149–207 form a disordered region; the sequence is ESLQSEGKNSKKEEPHELLQSQDSVGEKLGSGEPSHSVKVHTVPKPGKGADLSKPPCRK. Residue S169 is modified to Phosphoserine.

This sequence belongs to the R-transferase family. As to quaternary structure, monomer. Interacts with LIAT1; LIAT1 is not a substrate of ATE1, the interaction takes place in the cytoplasm and seems to increase ATE1 arginyltransferase activity.

Its subcellular location is the nucleus. The protein localises to the cytoplasm. The catalysed reaction is an N-terminal L-alpha-aminoacyl-[protein] + L-arginyl-tRNA(Arg) = an N-terminal L-arginyl-L-aminoacyl-[protein] + tRNA(Arg) + H(+). In terms of biological role, involved in the post-translational conjugation of arginine to the N-terminal aspartate or glutamate of a protein. This arginylation is required for degradation of the protein via the ubiquitin pathway. Does not arginylate cysteine residues. The polypeptide is Arginyl-tRNA--protein transferase 1 (ATE1) (Macaca fascicularis (Crab-eating macaque)).